We begin with the raw amino-acid sequence, 117 residues long: Putative cysteine proteinase inhibitor 7 (117 aa).

Positions methionine 1 to alanine 24 are cleaved as a signal peptide. The region spanning glycine 28 to alanine 84 is the Cystatin domain. The short motif at glutamine 71–glycine 75 is the Secondary area of contact element.

The protein belongs to the cystatin family. Phytocystatin subfamily.

The protein resides in the secreted. Its function is as follows. Specific inhibitor of cysteine proteinases. Probably involved in the regulation of endogenous processes and in defense against pests and pathogens. This chain is Putative cysteine proteinase inhibitor 7, found in Oryza sativa subsp. japonica (Rice).